A 350-amino-acid chain; its full sequence is 2,5-dihydroxypyridine 5,6-dioxygenase (350 aa).

3 residues coordinate Fe cation: His265, His318, and Asp320.

Fe(2+) is required as a cofactor.

The enzyme catalyses 2,5-dihydroxypyridine + O2 = N-formylmaleamate + H(+). Its pathway is cofactor degradation; nicotinate degradation. Its function is as follows. Catalyzes the dioxygenolytic ring cleavage of 2,5-dihydroxypyridine between carbons 5 and 6 generating N-formylmaleamate in the aerobic nicotinate degradation pathway. This chain is 2,5-dihydroxypyridine 5,6-dioxygenase (nicX), found in Pseudomonas putida (strain ATCC 47054 / DSM 6125 / CFBP 8728 / NCIMB 11950 / KT2440).